The primary structure comprises 620 residues: Probable potassium transport system protein Kup (620 aa).

Helical transmembrane passes span 11-31 (LAFLAMGIVYGDIGTSPLYAF), 51-71 (ILSLVFWAFVLIVSIKYLLLV), 100-120 (IAMLLGILATGFFFGEAVITP), 138-158 (LAPYVLPIAMMIIVALFAVQA), 167-187 (FFAPVMLLWFLVLALLGAHAI), 202-222 (AVHFVLLHGQHTLFILGLVVL), 246-266 (WFALVMPSLLLNYFGQGAYLL), 288-308 (LILLATFATVIASQAVISGIF), 334-354 (GQIYVPAANMLLFVAVIFVML), 364-384 (AAYGIAVTAIMMISSLLLVLV), 396-416 (VVTIGIAFIGMDTLLLASTST), and 418-438 (LMEGGWLPLLLGCVVFIVMYI).

This sequence belongs to the HAK/KUP transporter (TC 2.A.72) family.

The protein localises to the cell inner membrane. The enzyme catalyses K(+)(in) + H(+)(in) = K(+)(out) + H(+)(out). Transport of potassium into the cell. Likely operates as a K(+):H(+) symporter. The polypeptide is Probable potassium transport system protein Kup (Vibrio cholerae serotype O1 (strain ATCC 39541 / Classical Ogawa 395 / O395)).